The chain runs to 350 residues: uncharacterized protein (350 aa).

Residues 330 to 350 (RHPGDLRSEPHYRPSAKLAEF) form a disordered region. Residues 331-341 (HPGDLRSEPHY) are compositionally biased toward basic and acidic residues.

This is an uncharacterized protein from Mycobacterium tuberculosis.